The following is a 135-amino-acid chain: Small ribosomal subunit protein bS16 (135 aa).

Residues 82–135 are disordered; the sequence is RPAETVGKAKQAAKREADAKQAAKEAAEAKAAAADEKAAEAEASDSAESESTEG. Over residues 94–121 the composition is skewed to basic and acidic residues; it reads AKREADAKQAAKEAAEAKAAAADEKAAE. Residues 123–135 are compositionally biased toward acidic residues; that stretch reads EASDSAESESTEG.

This sequence belongs to the bacterial ribosomal protein bS16 family.

The sequence is that of Small ribosomal subunit protein bS16 from Synechococcus sp. (strain CC9605).